Reading from the N-terminus, the 333-residue chain is Phosphoenolpyruvate transferase (333 aa).

Residue Asp-65 participates in 7,8-didemethyl-8-hydroxy-5-deazariboflavin binding.

The protein belongs to the CofD family. As to quaternary structure, homodimer. Mg(2+) is required as a cofactor.

The enzyme catalyses enolpyruvoyl-2-diphospho-5'-guanosine + 7,8-didemethyl-8-hydroxy-5-deazariboflavin = dehydro coenzyme F420-0 + GMP + H(+). It participates in cofactor biosynthesis; coenzyme F420 biosynthesis. Its function is as follows. Catalyzes the transfer of the phosphoenolpyruvate moiety from enoylpyruvoyl-2-diphospho-5'-guanosine (EPPG) to 7,8-didemethyl-8-hydroxy-5-deazariboflavin (FO) with the formation of dehydro coenzyme F420-0 and GMP. This Mycobacterium leprae (strain TN) protein is Phosphoenolpyruvate transferase.